We begin with the raw amino-acid sequence, 244 residues long: Carboxy-S-adenosyl-L-methionine synthase (244 aa).

S-adenosyl-L-methionine-binding positions include tyrosine 41, 66–68, asparagine 134, and arginine 201; that span reads GCS.

Belongs to the class I-like SAM-binding methyltransferase superfamily. Cx-SAM synthase family. In terms of assembly, homodimer.

The enzyme catalyses prephenate + S-adenosyl-L-methionine = carboxy-S-adenosyl-L-methionine + 3-phenylpyruvate + H2O. Its function is as follows. Catalyzes the conversion of S-adenosyl-L-methionine (SAM) to carboxy-S-adenosyl-L-methionine (Cx-SAM). The protein is Carboxy-S-adenosyl-L-methionine synthase of Cellvibrio japonicus (strain Ueda107) (Pseudomonas fluorescens subsp. cellulosa).